We begin with the raw amino-acid sequence, 543 residues long: Splicing factor U2af large subunit B (543 aa).

Over residues 1–10 the composition is skewed to gly residues; sequence MADDNGGGGD. The disordered stretch occupies residues 1 to 171; it reads MADDNGGGGD…IPTPSQLPGS (171 aa). Composition is skewed to basic and acidic residues over residues 17-78 and 88-114; these read VRPE…DRDR and EHRD…ERDG. A compositionally biased stretch (basic residues) spans 115 to 126; that stretch reads HRRHRSRSRSRS. RRM domains are found at residues 207–290, 327–405, and 446–532; these read RRVY…RPTD, DRIF…RANQ, and QVVT…YPEN.

This sequence belongs to the splicing factor SR family.

The protein resides in the nucleus. Its function is as follows. Necessary for the splicing of pre-mRNA. In Triticum aestivum (Wheat), this protein is Splicing factor U2af large subunit B (U2AF65B).